The primary structure comprises 347 residues: Protein RecA (347 aa).

66–73 (GPESSGKT) contributes to the ATP binding site. The segment at 328-347 (MPKPNAPKATDEALDETGTD) is disordered.

The protein belongs to the RecA family.

The protein resides in the cytoplasm. Its function is as follows. Can catalyze the hydrolysis of ATP in the presence of single-stranded DNA, the ATP-dependent uptake of single-stranded DNA by duplex DNA, and the ATP-dependent hybridization of homologous single-stranded DNAs. It interacts with LexA causing its activation and leading to its autocatalytic cleavage. The protein is Protein RecA of Hydrogenovibrio crunogenus (strain DSM 25203 / XCL-2) (Thiomicrospira crunogena).